Here is a 219-residue protein sequence, read N- to C-terminus: Putative GEM-like protein 8 (219 aa).

Positions 96–174 constitute a GRAM domain; the sequence is KIYKRLFKVS…CKINGVNQSQ (79 aa).

This sequence belongs to the GEM family.

In Arabidopsis thaliana (Mouse-ear cress), this protein is Putative GEM-like protein 8.